The following is a 111-amino-acid chain: Cytochrome c 2.1 (111 aa).

Residue S2 is modified to N-acetylserine. Residues C20, C23, H24, and M85 each contribute to the heme c site.

Belongs to the cytochrome c family. In terms of processing, binds 1 heme c group covalently per subunit.

It localises to the mitochondrion intermembrane space. In terms of biological role, electron carrier protein. The oxidized form of the cytochrome c heme group can accept an electron from the heme group of the cytochrome c1 subunit of cytochrome reductase. Cytochrome c then transfers this electron to the cytochrome oxidase complex, the final protein carrier in the mitochondrial electron-transport chain. This Caenorhabditis elegans protein is Cytochrome c 2.1 (cyc-2.1).